Here is a 373-residue protein sequence, read N- to C-terminus: Queuine tRNA-ribosyltransferase accessory subunit 2 (373 aa).

Residues Cys-320, Cys-322, Cys-325, and His-351 each contribute to the Zn(2+) site.

This sequence belongs to the queuine tRNA-ribosyltransferase family. QTRT2 subfamily. Heterodimer of a catalytic subunit and an accessory subunit. Requires Zn(2+) as cofactor.

The protein resides in the cytoplasm. Its function is as follows. Non-catalytic subunit of the queuine tRNA-ribosyltransferase (TGT) that catalyzes the base-exchange of a guanine (G) residue with queuine (Q) at position 34 (anticodon wobble position) in tRNAs with GU(N) anticodons (tRNA-Asp, -Asn, -His and -Tyr), resulting in the hypermodified nucleoside queuosine (7-(((4,5-cis-dihydroxy-2-cyclopenten-1-yl)amino)methyl)-7-deazaguanosine). This Caenorhabditis elegans protein is Queuine tRNA-ribosyltransferase accessory subunit 2.